Here is a 1596-residue protein sequence, read N- to C-terminus: Transcription factor Zelda (1596 aa).

Disordered regions lie at residues 1–143, 209–273, and 490–530; these read MTSI…QQQQ, SGLG…GGAA, and TSPA…SVLP. Residues 13–24 are compositionally biased toward low complexity; that stretch reads AAEALASSSATD. The span at 25–53 shows a compositional bias: gly residues; the sequence is SGGGGAGGGGGGGGGGSGGPGAGGTGGVG. Positions 60 to 72 are enriched in polar residues; it reads NATISAAADSSDN. Composition is skewed to low complexity over residues 73–123 and 226–267; these read QPGT…ITHQ and SAPS…QTPG. Residues 501–518 are compositionally biased toward gly residues; it reads GGPGQEGAAGAAPGGGYR. Residues 552–576 form a C2H2-type 1 zinc finger; that stretch reads YNCTACNKWFTSSGHLKRHYNTTLH. Disordered regions lie at residues 578 to 813, 825 to 945, 1017 to 1074, and 1252 to 1322; these read NAVK…TTTA, EDSN…MGML, GEQH…MPLT, and QMQH…TTLP. A compositionally biased stretch (low complexity) spans 610 to 634; that stretch reads RGNAAAAAAAAAAAASASGQGQQQQ. A compositionally biased stretch (pro residues) spans 635 to 653; that stretch reads PPIPPPPANVPPPEPPRSP. The span at 656–668 shows a compositional bias: gly residues; the sequence is YGGGGGLGVGAMG. The segment covering 673-682 has biased composition (polar residues); sequence SQYSASPSPT. Composition is skewed to low complexity over residues 683–709 and 719–753; these read QQQQ…GYGY and NASP…HHNS. Polar residues predominate over residues 768–781; that stretch reads PHNNNTTQMPSSQM. Residues 796–813 are compositionally biased toward low complexity; sequence TTTRAPQITTTATTTTTA. Residues 830–840 show a composition bias toward basic residues; the sequence is THTHTHTHPNH. The segment covering 849 to 858 has biased composition (low complexity); it reads SSSSSSSMAT. The span at 864-877 shows a compositional bias: basic and acidic residues; that stretch reads QELRDQEQADDHLH. The span at 879 to 916 shows a compositional bias: low complexity; that stretch reads HQQASQQYLLSARHYHSSTPNTLSSSNTNPSTPSSNSP. Residues 904 to 1297 form a transactivation activation domain (TAD) region; that stretch reads SNTNPSTPSS…PLAKKRRGGN (394 aa). Over residues 921-932 the composition is skewed to polar residues; that stretch reads RQEQQGTDFSRT. Over residues 933 to 944 the composition is skewed to pro residues; it reads TPPPQPLPPMGM. Residues 1019–1036 are compositionally biased toward basic and acidic residues; it reads QHQRQEADHHQQQRELHQ. 2 stretches are compositionally biased toward low complexity: residues 1037–1062 and 1252–1275; these read LDQQ…SPTS and QMQH…QQQQ. Polar residues-rich tracts occupy residues 1276–1286 and 1309–1322; these read ILADQTQTMAQ and SSVG…TTLP. The segment at 1326–1349 adopts a C2H2-type 2 zinc-finger fold; sequence IKCLECDKEFTKNCYLTQHNKSFH. The C2H2-type 3; degenerate zinc-finger motif lies at 1355-1378; sequence FRCQKCGKRFQSEDVYTTHLGRHR. C2H2-type zinc fingers lie at residues 1384–1407 and 1413–1435; these read HKCE…EAIH and HMCD…LETH.

Zygotically expressed in the developing embryonic germ layers, nervous system, imaginal disk primordia and in larval wing and eye disks. In terms of tissue distribution, detected in the germline cells of the ovary, in unfertilized eggs and throughout early development. Later, it becomes mostly restricted to the nervous system and specific head regions. Also expressed in imaginal wing disks in third instar larvae.

It localises to the nucleus. The protein resides in the chromosome. Its function is as follows. Transcription factor required for zygotic genome activation (ZGA), a critical event in early embryonic development during which the developmental control passes from maternally provided mRNAs to the expression of the zygotic genome after fertilization. Binds to regulatory DNA sequences containing a 5'-CAGGTAG-3' sequence motif, which are highly enriched among developmental enhancers. Within 1 hour into development, or by the embryo's 8th nuclear cycle, binds the majority of its motifs genome-wide. Zelda-binding promotes nucleosome depletion and chromatin accessibility, thereby facilitating the binding of patterning transcription factors, including the binding of the dorsoventral patterning transcription factors dorsal (dl) and twist (twi), and the anteroposterior patterning transcription factors bicoid (bcd) and caudal (cad). Promotes the activity of patterning transcription factors, such as bcd and dl, by lowering the concentration threshold required for transcriptional activation. Required both for the earliest (minor) and major waves of transcription during ZGA. Also involved in maternal mRNA clearance during the maternal-to-zygote transition by promoting expression of microRNAs (miRNAs), such as miR-1, miR-9a and miR-309, which mediate degradation of maternally-loaded RNAs. Also involved in post-blastoderm development: nvolved in nervous system development by maintaining neuroblasts in an undifferentiated state and equired for wing disk development. Functionally, constitutes the main isoform expressed throughout development. Transcription factor required for zygotic genome activation (ZGA). Acts as a dominant negative inhibitor of transcription factor activity of isoform A. The protein is Transcription factor Zelda of Drosophila melanogaster (Fruit fly).